Reading from the N-terminus, the 549-residue chain is Tight junction-associated protein 1 (549 aa).

The interval M1 to E34 is disordered. Residues A14–L23 show a composition bias toward basic and acidic residues. The stretch at M42 to D171 forms a coiled coil. Disordered regions lie at residues R207 to G226 and V266 to P322. The residue at position 295 (S295) is a Phosphoserine. A compositionally biased stretch (pro residues) spans Y311 to L320. T313 carries the post-translational modification Phosphothreonine. Residues S315 and S340 each carry the phosphoserine modification. 3 disordered regions span residues E359–D404, Q410–F429, and L434–S549. Residues S369–H383 are compositionally biased toward polar residues. Residues P389–S400 are compositionally biased toward low complexity. T417 carries the phosphothreonine modification. S483 carries the post-translational modification Phosphoserine. Residues E485–T498 show a composition bias toward basic and acidic residues. Over residues R522 to R534 the composition is skewed to basic residues. S537 bears the Phosphoserine mark. The span at L538–S549 shows a compositional bias: polar residues.

In terms of assembly, interacts with DLG1. Interacts with ARF6 (GTP-bound form). In terms of tissue distribution, widely expressed including in adult thymus, heart, lung, liver, small intestine, kidney, spleen, testis and skeletal muscle and in embryonic brain but not detected in adult brain (at protein level).

Its subcellular location is the golgi apparatus. It is found in the trans-Golgi network. It localises to the cell junction. The protein localises to the tight junction. The protein resides in the cell membrane. In terms of biological role, plays a role in regulating the structure of the Golgi apparatus. In Mus musculus (Mouse), this protein is Tight junction-associated protein 1.